A 242-amino-acid chain; its full sequence is Probable transcriptional regulatory protein Bcep18194_A5621 (242 aa).

It belongs to the TACO1 family.

Its subcellular location is the cytoplasm. The chain is Probable transcriptional regulatory protein Bcep18194_A5621 from Burkholderia lata (strain ATCC 17760 / DSM 23089 / LMG 22485 / NCIMB 9086 / R18194 / 383).